The sequence spans 312 residues: Olfactory receptor 51A7 (312 aa).

The Extracellular segment spans residues 1–25 (MSVLNNSEVKLFLLIGIPGLEHAHI). Asn5 carries N-linked (GlcNAc...) asparagine glycosylation. Residues 26 to 46 (WFSIPICLMYLLAIMGNCTIL) traverse the membrane as a helical segment. The Cytoplasmic portion of the chain corresponds to 47–54 (FIIKTEPS). The helical transmembrane segment at 55–75 (LHEPMYYFLAMLAVSDMGLSL) threads the bilayer. Residues 76–99 (SSLPTMLRVFLFNAMGISPNACFA) are Extracellular-facing. Cys97 and Cys189 are oxidised to a cystine. A helical membrane pass occupies residues 100 to 120 (QEFFIHGFTVMESSVLLIMSL). Topologically, residues 121 to 139 (DRFLAIHNPLRYSSILTSN) are cytoplasmic. The chain crosses the membrane as a helical span at residues 140 to 160 (RVAKMGLILAIRSILLVIPFP). The Extracellular segment spans residues 161–196 (FTLRRLKYCQKNLLSHSYCLHQDTMKLACSDNKTNV). Residue Asn192 is glycosylated (N-linked (GlcNAc...) asparagine). The chain crosses the membrane as a helical span at residues 197–216 (IYGFFIALCTMLDLALIVLS). At 217-236 (YVLILKTILSIASLAERLKA) the chain is on the cytoplasmic side. The helical transmembrane segment at 237–257 (LNTCVSHICAVLTFYVPIITL) threads the bilayer. The Extracellular segment spans residues 258 to 272 (AAMHHFAKHKSPLVV). Residues 273-293 (ILIADMFLLVPPLMNPIVYCV) traverse the membrane as a helical segment. The Cytoplasmic portion of the chain corresponds to 294–312 (KTRQIWEKILGKLLNVCGR).

This sequence belongs to the G-protein coupled receptor 1 family.

It localises to the cell membrane. Its function is as follows. Odorant receptor. In Homo sapiens (Human), this protein is Olfactory receptor 51A7 (OR51A7).